We begin with the raw amino-acid sequence, 171 residues long: Ly6/PLAUR domain-containing protein 6 (171 aa).

The first 25 residues, 1–25, serve as a signal peptide directing secretion; sequence MEPSPALAWLLLLSLVADCLKAAQS. One can recognise a UPAR/Ly6 domain in the interval 47–141; the sequence is FKCFTCEKAA…PRNDTDATFA (95 aa). Cystine bridges form between cysteine 49/cysteine 77, cysteine 52/cysteine 61, cysteine 70/cysteine 96, cysteine 102/cysteine 121, cysteine 107/cysteine 118, and cysteine 122/cysteine 127. A NxI motif motif is present at residues 88 to 90; it reads NSI. Residues asparagine 134 and asparagine 147 are each glycosylated (N-linked (GlcNAc...) asparagine). Asparagine 147 carries GPI-anchor amidated asparagine lipidation. A propeptide spans 148-171 (removed in mature form); the sequence is QTNGHPHCVSVIVSCLWVWLGLTL.

As to quaternary structure, interacts with nicotinic acetylcholine receptors (nAChRs) including CHRNA3, CHRNA4, CHRNA5, CHRNA6, CHRNA7, CHRNB2 and CHRNB4. Interacts (via NxI motif) with LRP6. As to expression, expressed at high levels in the cortex and cerebellum of the brain, at moderate levels in the lung, kidney, and liver, and at low levels in the heart and prostate (at protein level). Expressed in neurons (at protein level).

The protein resides in the secreted. The protein localises to the cytoplasm. It localises to the cell membrane. It is found in the synapse. Its subcellular location is the synaptosome. The protein resides in the membrane raft. The protein localises to the cell projection. It localises to the dendrite. It is found in the perikaryon. In terms of biological role, acts as a modulator of nicotinic acetylcholine receptors (nAChRs) function in the brain. Inhibits nicotine-induced Ca(2+) influx through nAChRs. In vitro, specifically inhibits alpha-3:beta-4 and alpha-7 nAChR currents in an allosteric manner. Acts as a positive regulator of Wnt/beta-catenin signaling. The sequence is that of Ly6/PLAUR domain-containing protein 6 (Lypd6) from Rattus norvegicus (Rat).